We begin with the raw amino-acid sequence, 43 residues long: Protein PsbN (43 aa).

The chain crosses the membrane as a helical span at residues 5 to 27 (TLIAISISGLIVSFTGYALYTAF).

Belongs to the PsbN family.

The protein localises to the plastid. The protein resides in the chloroplast thylakoid membrane. Functionally, may play a role in photosystem I and II biogenesis. The chain is Protein PsbN from Cicer arietinum (Chickpea).